The sequence spans 471 residues: F-box only protein 3 (471 aa).

Positions 10 to 56 constitute an F-box domain; it reads PLTLESLPTDPLLLILSFLDYRDLINCCYVSRRLSQLSSHDPLWRRH. An ApaG domain is found at 278-408; sequence VATTGDITVS…FHMACPTFRV (131 aa). Residues 419 to 451 show a composition bias toward acidic residues; sequence EYEEMEEEEEEEEEEDEDDDSADMDESDEDDEE. Positions 419 to 455 are disordered; that stretch reads EYEEMEEEEEEEEEEDEDDDSADMDESDEDDEEERRR.

As to quaternary structure, part of a SCF (SKP1-cullin-F-box) protein ligase complex SCF(FBXO3) consisting of FBXO3, SKP1, CUL1 and RBX1. Interacts with PML, interaction is direct and takes place either alone or within the SCF complex. In terms of assembly, (Microbial infection) Interacts (via ApaG domain) with Rift valley fever virus NSs helical filament; this interaction forms a filamentous E3 which mediates degradation of TFIIH complex through interaction with GT2H1.

It localises to the nucleus. Its pathway is protein modification; protein ubiquitination. Functionally, substrate recognition component of the SCF (SKP1-CUL1-F-box protein)-type E3 ubiquitin ligase complex, SCF(FBXO3), which mediates the ubiquitination and subsequent proteasomal degradation of target proteins. Mediates the ubiquitination of HIPK2 and probably that of EP300, leading to rapid degradation by the proteasome. In the presence of PML, HIPK2 ubiquitination still occurs, but degradation is prevented. PML, HIPK2 and FBXO3 may act synergically to activate p53/TP53-dependent transactivation. The SCF(FBXO3) also acts as a regulator of inflammation by mediating ubiquitination and degradation of FBXL2 in response to lipopolysaccharide (LPS). The SCF(FBXO3) complex specifically recognizes FBXL2 phosphorylated at 'Thr-404' and promotes its ubiquitination. Its function is as follows. (Microbial infection) Associates with the Rift valley fever virus NSs to form a remodeled E3 ligase that triggers efficient proteasomal degradation of targeted proteins. The filamentous E3 ligase targets the TFIIH complex leading to robust inhibition of antiviral immunity and enhances viral pathogenesis. In Homo sapiens (Human), this protein is F-box only protein 3.